We begin with the raw amino-acid sequence, 356 residues long: Phosphatidylglycerol--prolipoprotein diacylglyceryl transferase (356 aa).

4 helical membrane-spanning segments follow: residues 24 to 44 (IKWYGIFITVGFVLAIILACV), 59 to 79 (WFVFIGIPVSLLGARIWSFII), 103 to 123 (LAIEGGVLLTVIAALIYFPLV), and 144 to 164 (VSMWVYADAIVPCILVGQIIG). Position 165 (arginine 165) interacts with a 1,2-diacyl-sn-glycero-3-phospho-(1'-sn-glycerol). 2 consecutive transmembrane segments (helical) span residues 209 to 229 (PFFLYESFINFWFFLAIYIGG) and 265 to 285 (FATSIVMSVLFALFGIILLVC).

It belongs to the Lgt family.

It is found in the cell membrane. The catalysed reaction is L-cysteinyl-[prolipoprotein] + a 1,2-diacyl-sn-glycero-3-phospho-(1'-sn-glycerol) = an S-1,2-diacyl-sn-glyceryl-L-cysteinyl-[prolipoprotein] + sn-glycerol 1-phosphate + H(+). It participates in protein modification; lipoprotein biosynthesis (diacylglyceryl transfer). Its function is as follows. Catalyzes the transfer of the diacylglyceryl group from phosphatidylglycerol to the sulfhydryl group of the N-terminal cysteine of a prolipoprotein, the first step in the formation of mature lipoproteins. In Malacoplasma penetrans (strain HF-2) (Mycoplasma penetrans), this protein is Phosphatidylglycerol--prolipoprotein diacylglyceryl transferase.